A 247-amino-acid polypeptide reads, in one-letter code: 3-deoxy-manno-octulosonate cytidylyltransferase (247 aa).

The protein belongs to the KdsB family.

The protein resides in the cytoplasm. The catalysed reaction is 3-deoxy-alpha-D-manno-oct-2-ulosonate + CTP = CMP-3-deoxy-beta-D-manno-octulosonate + diphosphate. It functions in the pathway nucleotide-sugar biosynthesis; CMP-3-deoxy-D-manno-octulosonate biosynthesis; CMP-3-deoxy-D-manno-octulosonate from 3-deoxy-D-manno-octulosonate and CTP: step 1/1. Its pathway is bacterial outer membrane biogenesis; lipopolysaccharide biosynthesis. Activates KDO (a required 8-carbon sugar) for incorporation into bacterial lipopolysaccharide in Gram-negative bacteria. The protein is 3-deoxy-manno-octulosonate cytidylyltransferase of Rhodopseudomonas palustris (strain BisA53).